A 72-amino-acid chain; its full sequence is Small ribosomal subunit protein bS20 (72 aa).

Belongs to the bacterial ribosomal protein bS20 family.

Binds directly to 16S ribosomal RNA. This Aeromonas salmonicida protein is Small ribosomal subunit protein bS20 (rpsT).